A 176-amino-acid polypeptide reads, in one-letter code: Probable DNA-directed RNA polymerase subunit delta (176 aa).

One can recognise an HTH HARE-type domain in the interval 14 to 81; that stretch reads KSFIDMAYTL…GENLWGLRDW (68 aa). Positions 114 to 176 are disordered; sequence LGEDEMDDDD…VFEDEEDFND (63 aa). 2 stretches are compositionally biased toward acidic residues: residues 116–145 and 153–176; these read EDEM…QVEE and VIEE…DFND.

This sequence belongs to the RpoE family. In terms of assembly, RNAP is composed of a core of 2 alpha, a beta and a beta' subunits. The core is associated with a delta subunit and one of several sigma factors.

Its function is as follows. Participates in both the initiation and recycling phases of transcription. In the presence of the delta subunit, RNAP displays an increased specificity of transcription, a decreased affinity for nucleic acids, and an increased efficiency of RNA synthesis because of enhanced recycling. The polypeptide is Probable DNA-directed RNA polymerase subunit delta (Staphylococcus aureus (strain JH1)).